An 822-amino-acid chain; its full sequence is Glycerol-3-phosphate acyltransferase (822 aa).

Positions C306–M311 match the HXXXXD motif motif. Residues A803–E822 are disordered.

Belongs to the GPAT/DAPAT family.

It localises to the cell inner membrane. It carries out the reaction sn-glycerol 3-phosphate + an acyl-CoA = a 1-acyl-sn-glycero-3-phosphate + CoA. It participates in phospholipid metabolism; CDP-diacylglycerol biosynthesis; CDP-diacylglycerol from sn-glycerol 3-phosphate: step 1/3. The protein is Glycerol-3-phosphate acyltransferase of Pectobacterium carotovorum subsp. carotovorum (strain PC1).